The following is a 504-amino-acid chain: MASRLTPLTLLLLLLAGDRAFSDPEATSHSTQDPLEAQAKSRESFPERDDSWSPPEPTVLPSTWPTTSVAITITNDTMGKVANESFSQHSQPAAQLPTDSPGQPPLNSSSQPSTASDLPTQATTEPFCPEPLAQCSDSDRDSSEAKLSEALTDFSVKLYHAFSATKMAKTNMAFSPFSIASLLTQVLLGAGDSTKSNLESILSYPKDFACVHQALKGFSSKGVTSVSQIFHSPDLAIRDTYVNASQSLYGSSPRVLGPDSAANLELINTWVAENTNHKIRKLLDSLPSDTCLVLLNAVYLSAKWKITFEPKKMMAPFFYKNSMIKVPMMSSVKYPVAQFDDHTLKAKVGQLQLSHNLSFVIVVPVFPKHQLKDVEKALNPTVFKAIMKKLELSKFLPTYLTMPHIKVKSSQDMLSVMEKLEFFDFTYDLNLCGLTEDPDLQVSAMKHETVLELTESGVEAAAASAISFGRSLPIFEVQRPFLFLLWDQQHRFPVFMGRVYDPRG.

An N-terminal signal peptide occupies residues 1–22 (MASRLTPLTLLLLLLAGDRAFS). The segment at 22 to 67 (SDPEATSHSTQDPLEAQAKSRESFPERDDSWSPPEPTVLPSTWPTT) is disordered. The span at 39–51 (AKSRESFPERDDS) shows a compositional bias: basic and acidic residues. 3 N-linked (GlcNAc...) asparagine glycosylation sites follow: N75, N83, and N107. Residues 85 to 124 (SFSQHSQPAAQLPTDSPGQPPLNSSSQPSTASDLPTQATT) are compositionally biased toward polar residues. The interval 85 to 141 (SFSQHSQPAAQLPTDSPGQPPLNSSSQPSTASDLPTQATTEPFCPEPLAQCSDSDRD) is disordered. Cystine bridges form between C128–C432 and C135–C210. N-linked (GlcNAc...) asparagine glycans are attached at residues N243 and N356.

This sequence belongs to the serpin family. As to quaternary structure, interacts with MASP1.

Its subcellular location is the secreted. Functionally, serine protease inhibitor, which acrs as a regulator of the classical complement pathway. Forms a proteolytically inactive stoichiometric complex with the C1r or C1s proteases. May also regulate blood coagulation, fibrinolysis and the generation of kinins. Very efficient inhibitor of FXIIa. Inhibits chymotrypsin and kallikrein. This chain is Plasma protease C1 inhibitor (Serping1), found in Mus musculus (Mouse).